A 344-amino-acid chain; its full sequence is uncharacterized protein (344 aa).

The protein belongs to the glycosyltransferase 2 family.

This is an uncharacterized protein from Escherichia coli (strain K12).